Consider the following 221-residue polypeptide: Aspartic protease inhibitor 1 (221 aa).

Residues 1 to 23 (MMKCLFFLCLCLFPILVFSSTFT) form the signal peptide. Residues 24 to 32 (SQNPINLPS) constitute a propeptide that is removed on maturation. Residues 26-31 (NPINLP) carry the Vacuolar targeting signal motif. The N-linked (GlcNAc...) asparagine glycan is linked to Asn51. Cystine bridges form between Cys80–Cys125 and Cys174–Cys186.

The protein belongs to the protease inhibitor I3 (leguminous Kunitz-type inhibitor) family. Tubers, young leaves and flower bud. Not detected in root, stem or mature leaves.

It localises to the vacuole. Its function is as follows. Inhibitor of cathepsin D (aspartic protease). May also inhibit trypsin and chymotrypsin (serine proteases). Protects the plant by inhibiting proteases of invading organisms. The polypeptide is Aspartic protease inhibitor 1 (Solanum tuberosum (Potato)).